We begin with the raw amino-acid sequence, 642 residues long: Wall-associated receptor kinase-like 6 (642 aa).

The N-terminal stretch at 1-28 (MKKTKTYQVFCIAALSVLTLQLINGSSA) is a signal peptide. The Extracellular portion of the chain corresponds to 29 to 357 (ATPPPPNSNS…PKITKPEKAS (329 aa)). 7 N-linked (GlcNAc...) asparagine glycosylation sites follow: Asn37, Asn72, Asn95, Asn137, Asn216, Asn240, and Asn276. The tract at residues 289–346 (CSCEYDYFSGMSYRICYCNYGYTGNPYLRHGCIDIDECEGHHNCGEGTCVNMPGTHSC) is atypical EGF-like. 3 cysteine pairs are disulfide-bonded: Cys291-Cys304, Cys326-Cys337, and Cys332-Cys346. Residues 358 to 378 (VLQGVLISLGVLLFVLGILGL) form a helical membrane-spanning segment. Over 379–642 (YKFIKKRTRI…KPLSRKRIGN (264 aa)) the chain is Cytoplasmic. The Protein kinase domain maps to 432 to 642 (FSMNRVLGQG…KPLSRKRIGN (211 aa)). ATP is bound by residues 438 to 446 (LGQGGQGTV) and Lys460. Phosphotyrosine is present on Tyr505. The active-site Proton acceptor is Asp559. Phosphothreonine is present on residues Thr593 and Thr598. Position 606 is a phosphotyrosine (Tyr606).

This sequence belongs to the protein kinase superfamily. Ser/Thr protein kinase family. In terms of tissue distribution, slightly expressed in the whole plant.

It localises to the membrane. The catalysed reaction is L-seryl-[protein] + ATP = O-phospho-L-seryl-[protein] + ADP + H(+). It catalyses the reaction L-threonyl-[protein] + ATP = O-phospho-L-threonyl-[protein] + ADP + H(+). Serine/threonine-protein kinase that may function as a signaling receptor of extracellular matrix component. This Arabidopsis thaliana (Mouse-ear cress) protein is Wall-associated receptor kinase-like 6 (WAKL6).